A 239-amino-acid chain; its full sequence is Protein-S-isoprenylcysteine O-methyltransferase (239 aa).

At 1–23 (MHQDFQEDEHEYPDIRRNPLHEV) the chain is on the cytoplasmic side. The chain crosses the membrane as a helical span at residues 24-44 (TMTSYILGILLGIFVGLFPQI). Residues 45–47 (RFK) are Lumenal-facing. Residues 48 to 68 (NFNLFIIALSLFHFLEYYITA) form a helical membrane-spanning segment. Residues 69–88 (KYNPLKVHSESFLLNNGKSY) are Cytoplasmic-facing. A helical transmembrane segment spans residues 89–109 (MAAHSFAILECLVESFLFPDL). A topological domain (lumenal) is located at residue lysine 110. The helical transmembrane segment at 111-131 (IFSYSLATKLCTVLGCLLVIL) threads the bilayer. Residues 132–175 (GQYTRTIAMHTAGHSFSHIVKTKKESDHVLVKTGVYSWSRHPSY) lie on the Cytoplasmic side of the membrane. Residues 159–162 (HVLV), tyrosine 167, and 172–175 (HPSY) contribute to the S-adenosyl-L-methionine site. The segment at residues 176–206 (LGFFWWAIGTQLLLLNPLSLVIFIFVLWKFF) is an intramembrane region (helical). The Cytoplasmic segment spans residues 207–239 (SDRIRVEEKYLIEFFSAEYIEYKNKVGVGIPFI). Residue arginine 209 participates in substrate binding. Glutamate 213 lines the S-adenosyl-L-methionine pocket.

This sequence belongs to the class VI-like SAM-binding methyltransferase superfamily. Isoprenylcysteine carboxyl methyltransferase family.

It is found in the endoplasmic reticulum membrane. The enzyme catalyses [protein]-C-terminal S-[(2E,6E)-farnesyl]-L-cysteine + S-adenosyl-L-methionine = [protein]-C-terminal S-[(2E,6E)-farnesyl]-L-cysteine methyl ester + S-adenosyl-L-homocysteine. Its function is as follows. Mediates C-terminal methylation of the isoprenylated C-terminal cysteine in A-factor mating pheromone and Ras proteins. Does not have a preference for the farnesyl or geranylgeranyl moieties in the model substrates N-acetyl-S-farnesyl-L-cysteine (AFC) and N-acetyl-S-geranylgeranyl-L-cysteine (AGGC) in vitro. The chain is Protein-S-isoprenylcysteine O-methyltransferase (STE14) from Saccharomyces cerevisiae (strain ATCC 204508 / S288c) (Baker's yeast).